A 497-amino-acid polypeptide reads, in one-letter code: ATP-dependent RNA helicase CshA (497 aa).

The Q motif signature appears at 1 to 29 (MKFSELGLSDSLLKAIKRSGYEEATPIQE). In terms of domain architecture, Helicase ATP-binding spans 32-202 (IPMVLEGKDV…VQFMSDPETV (171 aa)). 45–52 (AQTGTGKT) contacts ATP. The short motif at 150 to 153 (DEAD) is the DEAD box element. The 146-residue stretch at 228-373 (DIMTRLIDVQ…PLKPPTAEEA (146 aa)) folds into the Helicase C-terminal domain. Residues 425–497 (AASEVPVKIT…SFNIRHRKEN (73 aa)) are disordered. Over residues 448-458 (RNGNRNNSHGG) the composition is skewed to low complexity. Composition is skewed to basic residues over residues 459–473 (NHYRRKNFRRHQHGS) and 481–497 (KSHSSRHSFNIRHRKEN).

This sequence belongs to the DEAD box helicase family. CshA subfamily. As to quaternary structure, oligomerizes, may be a member of the RNA degradosome.

The protein localises to the cytoplasm. The protein resides in the cell membrane. It catalyses the reaction ATP + H2O = ADP + phosphate + H(+). In terms of biological role, DEAD-box RNA helicase possibly involved in RNA degradation. Unwinds dsRNA in both 5'- and 3'-directions, has RNA-dependent ATPase activity. Over-expression leads to cell aggregation. The sequence is that of ATP-dependent RNA helicase CshA from Limosilactobacillus reuteri (Lactobacillus reuteri).